The following is a 397-amino-acid chain: Digeranylgeranylglycerophospholipid reductase 3 (397 aa).

FAD is bound by residues Ala16, Asp35, Cys46, Ala47, Gly49, Arg102, Ala126, Asp283, Gly295, and Ile296. Lys338 contacts a 2,3-bis-O-(geranylgeranyl)-sn-glycerol 1-phospholipid.

Belongs to the geranylgeranyl reductase family. DGGGPL reductase subfamily. FAD serves as cofactor.

The enzyme catalyses a 2,3-bis-O-phytanyl-sn-glycerol 1-phospholipid + 8 A = a 2,3-bis-O-(geranylgeranyl)-sn-glycerol 1-phospholipid + 8 AH2. The catalysed reaction is 2,3-bis-O-(phytanyl)-sn-glycerol 1-phosphate + 8 A = 2,3-bis-O-(geranylgeranyl)-sn-glycerol 1-phosphate + 8 AH2. It catalyses the reaction CDP-2,3-bis-O-(geranylgeranyl)-sn-glycerol + 8 AH2 = CDP-2,3-bis-O-(phytanyl)-sn-glycerol + 8 A. It carries out the reaction archaetidylserine + 8 AH2 = 2,3-bis-O-phytanyl-sn-glycero-3-phospho-L-serine + 8 A. It functions in the pathway membrane lipid metabolism; glycerophospholipid metabolism. Functionally, is involved in the reduction of 2,3-digeranylgeranylglycerophospholipids (unsaturated archaeols) into 2,3-diphytanylglycerophospholipids (saturated archaeols) in the biosynthesis of archaeal membrane lipids. Catalyzes the formation of archaetidic acid (2,3-di-O-phytanyl-sn-glyceryl phosphate) from 2,3-di-O-geranylgeranylglyceryl phosphate (DGGGP) via the hydrogenation of each double bond of the isoprenoid chains. Is also probably able to reduce double bonds of geranyl groups in CDP-2,3-bis-O-(geranylgeranyl)-sn-glycerol and archaetidylserine, thus acting at various stages in the biosynthesis of archaeal membrane lipids. The protein is Digeranylgeranylglycerophospholipid reductase 3 of Methanosphaera stadtmanae (strain ATCC 43021 / DSM 3091 / JCM 11832 / MCB-3).